A 985-amino-acid polypeptide reads, in one-letter code: DNA repair protein REV1 (985 aa).

The BRCT domain maps to 161-249 (QSSKIFKNCV…RLLPWQNYSL (89 aa)). The interval 319-329 (YFAHSRLHHLS) is interaction with target DNA. DCTP is bound by residues Arg324 and 362–366 (DFDCF). Residues 358–554 (IFHIDFDCFF…FKLDDLPGVG (197 aa)) form the UmuC domain. Asp362 and Phe363 together coordinate Mg(2+). The interval 395–397 (TKN) is interaction with target DNA. DCTP is bound by residues 402–408 (SCNYVAR), Asn414, and Asp467. Mg(2+)-binding residues include Asp467 and Glu468. 2 interaction with target DNA regions span residues 554-557 (GHST) and 620-628 (RKSLSIDIN).

Belongs to the DNA polymerase type-Y family. Interacts with REV7. Requires Mg(2+) as cofactor.

The protein localises to the nucleus. It is found in the mitochondrion. Its function is as follows. Deoxycytidyl transferase involved in DNA repair. Transfers a dCMP residue from dCTP to the 3'-end of a DNA primer in a template-dependent reaction. May assist in the first step in the bypass of abasic lesions by the insertion of a nucleotide opposite the lesion. Required for normal induction of mutations by physical and chemical agents. Involved in mitochondrial DNA mutagenesis. This chain is DNA repair protein REV1 (REV1), found in Saccharomyces cerevisiae (strain ATCC 204508 / S288c) (Baker's yeast).